Consider the following 201-residue polypeptide: Glutathione peroxidase 1 (201 aa).

The residue at position 32 (serine 32) is a Phosphoserine. Selenocysteine 47 is an active-site residue. Position 47 (selenocysteine 47) is a non-standard amino acid, selenocysteine. N6-acetyllysine; alternate occurs at positions 86, 112, and 146. Lysine 86, lysine 112, and lysine 146 each carry N6-succinyllysine; alternate. Phosphoserine occurs at positions 195 and 199.

Belongs to the glutathione peroxidase family. Homotetramer. Interacts with MIEN1. In terms of processing, during periods of oxidative stress, Sec-47 may react with a superoxide radical, irreversibly lose hydroselenide and be converted to dehydroalanine.

It localises to the cytoplasm. The protein resides in the mitochondrion. The catalysed reaction is 2 glutathione + H2O2 = glutathione disulfide + 2 H2O. It catalyses the reaction a hydroperoxy polyunsaturated fatty acid + 2 glutathione = a hydroxy polyunsaturated fatty acid + glutathione disulfide + H2O. It carries out the reaction tert-butyl hydroperoxide + 2 glutathione = tert-butanol + glutathione disulfide + H2O. The enzyme catalyses cumene hydroperoxide + 2 glutathione = 2-phenylpropan-2-ol + glutathione disulfide + H2O. The catalysed reaction is (13S)-hydroperoxy-(9Z,11E)-octadecadienoate + 2 glutathione = (13S)-hydroxy-(9Z,11E)-octadecadienoate + glutathione disulfide + H2O. It catalyses the reaction (9S)-hydroperoxy-(10E,12Z)-octadecadienoate + 2 glutathione = (9S)-hydroxy-(10E,12Z)-octadecadienoate + glutathione disulfide + H2O. It carries out the reaction (5S)-hydroperoxy-(6E,8Z,11Z,14Z)-eicosatetraenoate + 2 glutathione = (5S)-hydroxy-(6E,8Z,11Z,14Z)-eicosatetraenoate + glutathione disulfide + H2O. The enzyme catalyses (12S)-hydroperoxy-(5Z,8Z,10E,14Z)-eicosatetraenoate + 2 glutathione = (12S)-hydroxy-(5Z,8Z,10E,14Z)-eicosatetraenoate + glutathione disulfide + H2O. The catalysed reaction is (12R)-hydroperoxy-(5Z,8Z,10E,14Z)-eicosatetraenoate + 2 glutathione = (12R)-hydroxy-(5Z,8Z,10E,14Z)-eicosatetraenoate + glutathione disulfide + H2O. It catalyses the reaction (15S)-hydroperoxy-(5Z,8Z,11Z,13E)-eicosatetraenoate + 2 glutathione = (15S)-hydroxy-(5Z,8Z,11Z,13E)-eicosatetraenoate + glutathione disulfide + H2O. It carries out the reaction (5S)-hydroperoxy-(6E,8Z,11Z,14Z,17Z)-eicosapentaenoate + 2 glutathione = (5S)-hydroxy-(6E,8Z,11Z,14Z,17Z)-eicosapentaenoate + glutathione disulfide + H2O. The enzyme catalyses (12S)-hydroperoxy-(5Z,8Z,10E,14Z,17Z)-eicosapentaenoate + 2 glutathione = (12S)-hydroxy-(5Z,8Z,10E,14Z,17Z)-eicosapentaenoate + glutathione disulfide + H2O. The catalysed reaction is (15S)-hydroperoxy-(5Z,8Z,11Z,13E,17Z)-eicosapentaenoate + 2 glutathione = (15S)-hydroxy-(5Z,8Z,11Z,13E,17Z)-eicosapentaenoate + glutathione disulfide + H2O. It catalyses the reaction (15S)-hydroperoxy-(11Z,13E)-eicosadienoate + 2 glutathione = (15S)-hydroxy-(11Z,13E)-eicosadienoate + glutathione disulfide + H2O. It carries out the reaction (17S)-hydroperoxy-(4Z,7Z,10Z,13Z,15E,19Z)-docosahexaenoate + 2 glutathione = (17S)-hydroxy-(4Z,7Z,10Z,13Z,15E,19Z)-docosahexaenoate + glutathione disulfide + H2O. Its function is as follows. Catalyzes the reduction of hydroperoxides in a glutathione-dependent manner thus regulating cellular redox homeostasis. Can reduce small soluble hydroperoxides such as H2O2, cumene hydroperoxide and tert-butyl hydroperoxide, as well as several fatty acid-derived hydroperoxides. In platelets catalyzes the reduction of 12-hydroperoxyeicosatetraenoic acid, the primary product of the arachidonate 12-lipoxygenase pathway. This chain is Glutathione peroxidase 1 (GPX1), found in Pan troglodytes (Chimpanzee).